Consider the following 200-residue polypeptide: 3-isopropylmalate dehydratase small subunit (200 aa).

The protein belongs to the LeuD family. LeuD type 1 subfamily. As to quaternary structure, heterodimer of LeuC and LeuD.

The catalysed reaction is (2R,3S)-3-isopropylmalate = (2S)-2-isopropylmalate. The protein operates within amino-acid biosynthesis; L-leucine biosynthesis; L-leucine from 3-methyl-2-oxobutanoate: step 2/4. Functionally, catalyzes the isomerization between 2-isopropylmalate and 3-isopropylmalate, via the formation of 2-isopropylmaleate. The chain is 3-isopropylmalate dehydratase small subunit from Erythrobacter litoralis (strain HTCC2594).